A 165-amino-acid chain; its full sequence is HTH-type transcriptional regulator IscR (165 aa).

The region spanning 2-131 (RLTSKGRYAV…NNITLAELVN (130 aa)) is the HTH rrf2-type domain. Positions 28 to 51 (LADISERQGISLSYLEQLFSRLRK) form a DNA-binding region, H-T-H motif. Residues cysteine 92, cysteine 98, and cysteine 104 each coordinate [2Fe-2S] cluster.

[2Fe-2S] cluster is required as a cofactor.

In terms of biological role, regulates the transcription of several operons and genes involved in the biogenesis of Fe-S clusters and Fe-S-containing proteins. This chain is HTH-type transcriptional regulator IscR, found in Erwinia tasmaniensis (strain DSM 17950 / CFBP 7177 / CIP 109463 / NCPPB 4357 / Et1/99).